The primary structure comprises 118 residues: Large ribosomal subunit protein bL20 (118 aa).

Belongs to the bacterial ribosomal protein bL20 family.

Its function is as follows. Binds directly to 23S ribosomal RNA and is necessary for the in vitro assembly process of the 50S ribosomal subunit. It is not involved in the protein synthesizing functions of that subunit. The polypeptide is Large ribosomal subunit protein bL20 (Serratia proteamaculans (strain 568)).